The sequence spans 44 residues: Homeobox protein DLX-1 (44 aa).

Positions 19-44 are disordered; that stretch reads RALSAGSPPVPPGWNRIPPLGRAQEE.

The protein belongs to the distal-less homeobox family. Interacts with SMAD4 (via homeobox DNA-binding domain). Interacts (via homeobox DNA-binding domain) with POU4F2; this interaction suppresses DLX1-mediated transcriptional activity in postnatal retina and enhances retinal ganglion cell (RGC) differentiation.

It localises to the nucleus. Plays a role as a transcriptional activator or repressor. Inhibits several cytokine signaling pathways, such as TGFB1, activin-A/INHBA and BMP4 by interfering with the transcriptional stimulatory activity of transcription factors, such as MSX2, FAST2, SMAD2 and SMAD3 during hematopoietic cell differentiation. Plays a role in terminal differentiation of interneurons, such as amacrine and bipolar cells in the developing retina. Likely to play a regulatory role in the development of the ventral forebrain. May play a role in craniofacial patterning and morphogenesis and may be involved in the early development of diencephalic subdivisions. The chain is Homeobox protein DLX-1 (Dlx1) from Rattus norvegicus (Rat).